The sequence spans 467 residues: Trigger factor (467 aa).

A PPIase FKBP-type domain is found at 162–243 (GDFVSIDLSA…LNSVKERHLP (82 aa)). The segment covering 426–435 (EEGNELDLDE) has biased composition (acidic residues). Residues 426 to 467 (EEGNELDLDELFGTQAGEEQGEQAEGTEATDEQSAKADAKAE) form a disordered region. Residues 436 to 452 (LFGTQAGEEQGEQAEGT) show a composition bias toward low complexity. Basic and acidic residues predominate over residues 458–467 (QSAKADAKAE).

Belongs to the FKBP-type PPIase family. Tig subfamily.

Its subcellular location is the cytoplasm. The catalysed reaction is [protein]-peptidylproline (omega=180) = [protein]-peptidylproline (omega=0). In terms of biological role, involved in protein export. Acts as a chaperone by maintaining the newly synthesized protein in an open conformation. Functions as a peptidyl-prolyl cis-trans isomerase. This chain is Trigger factor, found in Saccharopolyspora erythraea (strain ATCC 11635 / DSM 40517 / JCM 4748 / NBRC 13426 / NCIMB 8594 / NRRL 2338).